A 423-amino-acid polypeptide reads, in one-letter code: MTQTTAAVICGEKDIQLRTFELPSISADELLVKNISNSVCLSTYKAALLGSKHKRVPENIDEVPVITGHEYAGVIVEVGENLKDQFKAGDSFVLQPAMGLPTGYSAGYSYETFGGNATYSIIPKIAIDLGCVLPYDGSYYADASLAEPMSCIIGAFHASYHTTQFVYEHEMGIKEGGTLALLACAGPMGIGAIDYAINGPVKPRRIVVTDIDEDRLSRAESLIPVSAAKAQGIELIYVNTIEMEDPVTYLKSLNDDQGYDDVMVYAAVAQVLEQADALLGNDGCLNFFAGPTDKEFKVPFNFYNVHYESTHIVGTSGGSTGDMVESLELSAQGDINPSFMITHVGGLQAAPHTILNQLDIPGGKKLIYPHIDLPLTAIDNFASLAEQDPFFSELDAILAKNNYVWNQHAEKALLEFYDVSLSV.

Zn(2+) is bound by residues Cys-40, His-69, and Glu-70.

This sequence belongs to the zinc-containing alcohol dehydrogenase family. Zn(2+) serves as cofactor.

The enzyme catalyses D-mannitol 1-phosphate + NAD(+) = beta-D-fructose 6-phosphate + NADH + H(+). In terms of biological role, seems to be involved in mannitol utilization. Complements an E.coli mtlD deletion mutant. The protein is Mannitol-1-phosphate 5-dehydrogenase of Aliivibrio fischeri (strain ATCC 700601 / ES114) (Vibrio fischeri).